Reading from the N-terminus, the 376-residue chain is Actin, cytoplasmic (376 aa).

This sequence belongs to the actin family.

Its subcellular location is the cytoplasm. The protein localises to the cytoskeleton. It catalyses the reaction ATP + H2O = ADP + phosphate + H(+). Actins are highly conserved proteins that are involved in various types of cell motility and are ubiquitously expressed in all eukaryotic cells. The sequence is that of Actin, cytoplasmic from Tetrahymena pyriformis.